The primary structure comprises 935 residues: Progesterone receptor (935 aa).

The segment at 1–164 (MTELKAKGPR…PATQGVLSPL (164 aa)) is AF3; mediates transcriptional activation. The disordered stretch occupies residues 1-254 (MTELKAKGPR…GGAAAGGGAA (254 aa)). The tract at residues 1-568 (MTELKAKGPR…YSFESLPQKI (568 aa)) is modulating, Pro-Rich. Ser-20 is subject to Phosphoserine. Residues 55 to 59 (LDGLL) carry the LXXL motif 1 motif. Ser-81 bears the Phosphoserine mark. An LXXL motif 2 motif is present at residues 115-119 (LDTLL). Residues Ser-130 and Ser-162 each carry the phosphoserine modification. Residues 165-305 (MSRSGGKAGD…LATTVMDFIH (141 aa)) form a mediates transcriptional transrepression region. The Nuclear localization signal signature appears at 183 to 187 (KVLPR). Ser-190 and Ser-213 each carry phosphoserine. Acidic residues predominate over residues 220 to 231 (EVEEEDGSESED). Over residues 232–246 (SAGPLLKGKPRALGG) the composition is skewed to low complexity. Residue Ser-294 is modified to Phosphoserine; by MAPK1. The interval 331–378 (GGAGAASAFAPPRSSPSASSTPVAVGDFPDCAYPPDAEPKDDAYPLYS) is disordered. The span at 335–350 (AASAFAPPRSSPSASS) shows a compositional bias: low complexity. Position 345 is a phosphoserine; by MAPK (Ser-345). Residue Lys-388 forms a Glycyl lysine isopeptide (Lys-Gly) (interchain with G-Cter in SUMO); alternate linkage. A Glycyl lysine isopeptide (Lys-Gly) (interchain with G-Cter in ubiquitin); alternate cross-link involves residue Lys-388. Phosphoserine; by CDK2 is present on Ser-400. Positions 418 to 430 (PLGPPPPLPPRAP) are enriched in pro residues. A disordered region spans residues 418–438 (PLGPPPPLPPRAPPTRAGEAA). The segment at 456 to 548 (STLECILYKA…VYPPYLNYLR (93 aa)) is AF1; mediates transcriptional activation. Residue Lys-533 forms a Glycyl lysine isopeptide (Lys-Gly) (interchain with G-Cter in SUMO) linkage. NR C4-type zinc fingers lie at residues 569–589 (CLICGDEASGCHYGVLTCGSC) and 605–629 (CAGRNDCIVDKIRRKNCPACRLRKC). The nuclear receptor DNA-binding region spans 569 to 641 (CLICGDEASG…AGMVLGGRKF (73 aa)). Residue Ser-678 is modified to Phosphoserine. One can recognise an NR LBD domain in the interval 681 to 915 (QDIQLIPPLI…EFPEMMSEVI (235 aa)). The segment at 689-935 (LINLLMSIEP…MVKPLLFHKK (247 aa)) is AF2; mediates transcriptional activation.

Belongs to the nuclear hormone receptor family. In terms of assembly, interacts with SMARD1 and UNC45A. Interacts with CUEDC2; the interaction promotes ubiquitination, decreases sumoylation, and represses transcriptional activity. Interacts with PIAS3; the interaction promotes sumoylation of PR in a hormone-dependent manner, inhibits DNA-binding, and alters nuclear export. Interacts with SP1; the interaction requires ligand-induced phosphorylation on Ser-345 by ERK1/2-MAPK. Interacts with PRMT2. Interacts with NCOA2 and NCOA1. Interacts with KLF9. Interacts with GTF2B. Post-translationally, phosphorylated on multiple serine sites. Several of these sites are hormone-dependent. Phosphorylation on Ser-294 is highly hormone-dependent and modulates ubiquitination and sumoylation on Lys-388. Phosphorylation on Ser-102 and Ser-345 also requires induction by hormone. Basal phosphorylation on Ser-81, Ser-162, Ser-190 and Ser-400 is increased in response to progesterone and can be phosphorylated in vitro by the CDK2-A1 complex. Increased levels of phosphorylation on Ser-400 also in the presence of EGF, heregulin, IGF, PMA and FBS. Phosphorylation at this site by CDK2 is ligand-independent, and increases nuclear translocation and transcriptional activity. Phosphorylation at Ser-162 and Ser-294, but not at Ser-190, is impaired during the G(2)/M phase of the cell cycle. Phosphorylation on Ser-345 by ERK1/2 MAPK is required for interaction with SP1. Sumoylation is hormone-dependent and represses transcriptional activity. Sumoylation on all three sites is enhanced by PIAS3. Desumoylated by SENP1. Sumoylation on Lys-388, the main site of sumoylation, is repressed by ubiquitination on the same site, and modulated by phosphorylation at Ser-294. In terms of processing, ubiquitination is hormone-dependent and represses sumoylation on the same site. Promoted by MAPK-mediated phosphorylation on Ser-294. Post-translationally, palmitoylated by ZDHHC7 and ZDHHC21. Palmitoylation is required for plasma membrane targeting and for rapid intracellular signaling via ERK and AKT kinases and cAMP generation.

Its subcellular location is the nucleus. It localises to the cytoplasm. The steroid hormones and their receptors are involved in the regulation of eukaryotic gene expression and affect cellular proliferation and differentiation in target tissues. Transcriptional activator of several progesteron-dependent promoters in a variety of cell types. Involved in activation of SRC-dependent MAPK signaling on hormone stimulation. This Pongo pygmaeus (Bornean orangutan) protein is Progesterone receptor (PGR).